The primary structure comprises 333 residues: UDP-N-acetylglucosamine 4,6-dehydratase (inverting) (333 aa).

NADP(+)-binding positions include Thr19–Phe22, Ser43–Lys48, Asp67–Val68, Ala87, Lys91, and Leu129–Ser130. Lys91 serves as a coordination point for substrate. The active site involves Lys133. NADP(+)-binding residues include Tyr141 and Lys145. Substrate is bound at residue Asn173. Val174–Arg178 contacts NADP(+). Substrate is bound by residues Val181, Thr199, Arg258, and Glu261.

The protein belongs to the polysaccharide synthase family. As to quaternary structure, homohexamer. It depends on NADP(+) as a cofactor.

The catalysed reaction is UDP-N-acetyl-alpha-D-glucosamine = UDP-2-acetamido-2,6-dideoxy-beta-L-arabino-hex-4-ulose + H2O. In terms of biological role, catalyzes the first step in the biosynthesis of pseudaminic acid, a sialic-acid-like sugar that is used to modify flagellin. Has both C6 dehydratase and C5 epimerase activities that result in the production of both UDP-2-acetamido-2,6-dideoxy-beta-L-arabino-4-hexulose and UDP-2-acetamido-2,6-dideoxy-alpha-D-xylo-4-hexulose. The sequence is that of UDP-N-acetylglucosamine 4,6-dehydratase (inverting) (pseB) from Helicobacter pylori (strain ATCC 700392 / 26695) (Campylobacter pylori).